The primary structure comprises 827 residues: uncharacterized protein (827 aa).

The PAS 1 domain occupies 12–82 (FDADFEAILN…DMDIGVLSTG (71 aa)). Positions 212–264 (LDVEFRLAAAEGGYSWYRSRAATRRAEDGSILRWYGTVEDIDDRRKMFEALKE) constitute a PAC 1 domain. The 71-residue stretch at 265 to 335 (SEARFRAIAD…RVFYQAFDLR (71 aa)) folds into the PAS 2 domain. Residues 338-390 (VRMEYRLKRAGGGSAWVIDIGQPRFASDGTFLGFVGIALDITERRNAEQERLL) form the PAC 2 domain. A GGDEF domain is found at 428 to 561 (TRLAILCLDL…GGGTIVQYEP (134 aa)). The 251-residue stretch at 570 to 820 (RQRMKVSLRH…QAMALLKSRS (251 aa)) folds into the EAL domain.

This is an uncharacterized protein from Sinorhizobium fredii (strain NBRC 101917 / NGR234).